The following is an 84-amino-acid chain: UPF0457 protein BC_3525 (84 aa).

The protein belongs to the UPF0457 family.

This Bacillus cereus (strain ATCC 14579 / DSM 31 / CCUG 7414 / JCM 2152 / NBRC 15305 / NCIMB 9373 / NCTC 2599 / NRRL B-3711) protein is UPF0457 protein BC_3525.